The following is a 3590-amino-acid chain: Filamentous hemagglutinin (3590 aa).

2 disordered regions span residues 3256–3309 (GGGS…VEVS) and 3417–3498 (APPP…GRHV). Residues 3289-3299 (PSRPTTPPASP) are compositionally biased toward pro residues. The span at 3300 to 3309 (QPIRATVEVS) shows a compositional bias: low complexity. The segment covering 3417–3432 (APPPVVETAQPLPPVK) has biased composition (pro residues).

The protein resides in the cell surface. Its function is as follows. Evidence for a role in host-cell binding and infection. This chain is Filamentous hemagglutinin (fhaB), found in Bordetella pertussis (strain Tohama I / ATCC BAA-589 / NCTC 13251).